We begin with the raw amino-acid sequence, 286 residues long: ATP synthase gamma chain (286 aa).

Belongs to the ATPase gamma chain family. As to quaternary structure, F-type ATPases have 2 components, CF(1) - the catalytic core - and CF(0) - the membrane proton channel. CF(1) has five subunits: alpha(3), beta(3), gamma(1), delta(1), epsilon(1). CF(0) has three main subunits: a, b and c.

The protein localises to the cell inner membrane. In terms of biological role, produces ATP from ADP in the presence of a proton gradient across the membrane. The gamma chain is believed to be important in regulating ATPase activity and the flow of protons through the CF(0) complex. This Shewanella putrefaciens (strain CN-32 / ATCC BAA-453) protein is ATP synthase gamma chain.